The chain runs to 178 residues: ATP-dependent protease subunit HslV (178 aa).

Residue Thr5 is part of the active site. Na(+)-binding residues include Ser161, Cys164, and Thr167.

This sequence belongs to the peptidase T1B family. HslV subfamily. A double ring-shaped homohexamer of HslV is capped on each side by a ring-shaped HslU homohexamer. The assembly of the HslU/HslV complex is dependent on binding of ATP.

The protein resides in the cytoplasm. The enzyme catalyses ATP-dependent cleavage of peptide bonds with broad specificity.. Allosterically activated by HslU binding. Protease subunit of a proteasome-like degradation complex believed to be a general protein degrading machinery. This Syntrophomonas wolfei subsp. wolfei (strain DSM 2245B / Goettingen) protein is ATP-dependent protease subunit HslV.